The primary structure comprises 135 residues: Interleukin-4 (135 aa).

An N-terminal signal peptide occupies residues Met-1 to Gly-24. 3 disulfides stabilise this stretch: Cys-27/Cys-135, Cys-48/Cys-85, and Cys-70/Cys-105. An N-linked (GlcNAc...) asparagine glycan is attached at Asn-62.

It belongs to the IL-4/IL-13 family.

The protein resides in the secreted. In terms of biological role, participates in at least several B-cell activation processes as well as of other cell types. It is a costimulator of DNA-synthesis. It induces the expression of class II MHC molecules on resting B-cells. It enhances both secretion and cell surface expression of IgE and IgG1. It also regulates the expression of the low affinity Fc receptor for IgE (CD23) on both lymphocytes and monocytes. Positively regulates IL31RA expression in macrophages. Stimulates autophagy in dendritic cells by interfering with mTORC1 signaling and through the induction of RUFY4. This is Interleukin-4 (IL4) from Boselaphus tragocamelus (Nilgai).